The following is a 511-amino-acid chain: MTIILHPGSVLLRDLATIYWTGVPARLDPSFDAGIVKAADRIAEIAAGNAPVYGINTGFGKLASIKIDSADVAALQRNLVLSHCCGVGEALPENVVRLMMALKLVSLGRGASGVRLELVRLIEAMLARGVIPVIPEKGSVGASGDLAPLAHMAAVMMGHGEAFFGGERLNGATALLKAGLQPVELAAKEGLALINGTQTSTALALAGLFRAHRAAQSALITGAMSTDAAMGSSAPFHPEIHTLRGHRGQIDTAEALRALLENSPIRQSHIEGDERVQDPYCIRCQPQVDGACLDLLRSVARTLEIEANAVTDNPLVLSDNSVVAGGNFHAEPVAFAADQIVLAICEIGAIAQRRIALLVDPALSYGLPAFLAKKPGLNSGLMIAEVTSAALMSENKQMSHPASVDSTPTSANQEDHVSMACHGARRLLPMTENLFAIIGIEALCAAQGVELRAPLATSPELTKAIAAIRNVVPSLEEDRYMANDLKAATVLIASGSLNESVSSGILPALEV.

The 5-imidazolinone (Ala-Gly) cross-link spans Ala-142–Gly-144. 2,3-didehydroalanine (Ser) is present on Ser-143.

It belongs to the PAL/histidase family. In terms of processing, contains an active site 4-methylidene-imidazol-5-one (MIO), which is formed autocatalytically by cyclization and dehydration of residues Ala-Ser-Gly.

It is found in the cytoplasm. The catalysed reaction is L-histidine = trans-urocanate + NH4(+). The protein operates within amino-acid degradation; L-histidine degradation into L-glutamate; N-formimidoyl-L-glutamate from L-histidine: step 1/3. This is Histidine ammonia-lyase from Chelativorans sp. (strain BNC1).